The following is a 406-amino-acid chain: Multifunctional CCA protein (406 aa).

Residues Gly-8 and Arg-11 each coordinate ATP. 2 residues coordinate CTP: Gly-8 and Arg-11. Residues Glu-21 and Asp-23 each coordinate Mg(2+). 3 residues coordinate ATP: Arg-91, Arg-137, and Arg-140. CTP contacts are provided by Arg-91, Arg-137, and Arg-140. The HD domain maps to 225–326 (TGIHTLKVLE…LKLLNRVDAF (102 aa)).

This sequence belongs to the tRNA nucleotidyltransferase/poly(A) polymerase family. Bacterial CCA-adding enzyme type 1 subfamily. As to quaternary structure, monomer. Can also form homodimers and oligomers. Requires Mg(2+) as cofactor. Ni(2+) serves as cofactor.

It carries out the reaction a tRNA precursor + 2 CTP + ATP = a tRNA with a 3' CCA end + 3 diphosphate. It catalyses the reaction a tRNA with a 3' CCA end + 2 CTP + ATP = a tRNA with a 3' CCACCA end + 3 diphosphate. In terms of biological role, catalyzes the addition and repair of the essential 3'-terminal CCA sequence in tRNAs without using a nucleic acid template. Adds these three nucleotides in the order of C, C, and A to the tRNA nucleotide-73, using CTP and ATP as substrates and producing inorganic pyrophosphate. tRNA 3'-terminal CCA addition is required both for tRNA processing and repair. Also involved in tRNA surveillance by mediating tandem CCA addition to generate a CCACCA at the 3' terminus of unstable tRNAs. While stable tRNAs receive only 3'-terminal CCA, unstable tRNAs are marked with CCACCA and rapidly degraded. In Nitrosococcus oceani (strain ATCC 19707 / BCRC 17464 / JCM 30415 / NCIMB 11848 / C-107), this protein is Multifunctional CCA protein.